Reading from the N-terminus, the 582-residue chain is Beta-glucosidase 28 (582 aa).

The N-terminal stretch at 1-21 (MKMHFFILLVITSWLSEKITS) is a signal peptide. A beta-D-glucoside is bound by residues Q48, H151, and 196-197 (NE). E197 (proton donor) is an active-site residue. A disulfide bond links C216 and C224. N-linked (GlcNAc...) asparagine glycosylation is found at N255 and N330. Residue Y340 coordinates a beta-D-glucoside. An N-linked (GlcNAc...) asparagine glycan is attached at N370. E412 is a binding site for a beta-D-glucoside. E412 functions as the Nucleophile in the catalytic mechanism. A glycan (N-linked (GlcNAc...) asparagine) is linked at N430. Residues W462, 469–470 (EW), and F478 contribute to the a beta-D-glucoside site. Residues N521 and N544 are each glycosylated (N-linked (GlcNAc...) asparagine).

This sequence belongs to the glycosyl hydrolase 1 family.

The catalysed reaction is Hydrolysis of terminal, non-reducing beta-D-glucosyl residues with release of beta-D-glucose.. In Arabidopsis thaliana (Mouse-ear cress), this protein is Beta-glucosidase 28.